The sequence spans 430 residues: Serine--tRNA ligase (430 aa).

Positions 44–65 (TESLQAERNSRSKSIGAAKARG) are disordered. Residue 237–239 (TAE) participates in L-serine binding. 268 to 270 (RSE) contacts ATP. Glu291 contacts L-serine. 355–358 (EISS) lines the ATP pocket. Ser391 contacts L-serine.

This sequence belongs to the class-II aminoacyl-tRNA synthetase family. Type-1 seryl-tRNA synthetase subfamily. In terms of assembly, homodimer. The tRNA molecule binds across the dimer.

It is found in the cytoplasm. It catalyses the reaction tRNA(Ser) + L-serine + ATP = L-seryl-tRNA(Ser) + AMP + diphosphate + H(+). It carries out the reaction tRNA(Sec) + L-serine + ATP = L-seryl-tRNA(Sec) + AMP + diphosphate + H(+). It functions in the pathway aminoacyl-tRNA biosynthesis; selenocysteinyl-tRNA(Sec) biosynthesis; L-seryl-tRNA(Sec) from L-serine and tRNA(Sec): step 1/1. In terms of biological role, catalyzes the attachment of serine to tRNA(Ser). Is also able to aminoacylate tRNA(Sec) with serine, to form the misacylated tRNA L-seryl-tRNA(Sec), which will be further converted into selenocysteinyl-tRNA(Sec). The protein is Serine--tRNA ligase of Edwardsiella ictaluri (strain 93-146).